The sequence spans 229 residues: UPF0758 protein CLL_A0562 (229 aa).

One can recognise an MPN domain in the interval 107–229 (KIMSPNDLAM…FISLKEKGFI (123 aa)). H178, H180, and D191 together coordinate Zn(2+). Positions 178–191 (HNHPSGDPTPSKED) match the JAMM motif motif.

It belongs to the UPF0758 family.

This chain is UPF0758 protein CLL_A0562, found in Clostridium botulinum (strain Eklund 17B / Type B).